Here is a 354-residue protein sequence, read N- to C-terminus: MTPAADGDDDETTCIRALELIFTFVVPMTLKATIKLGLLDALTGGGHALTADELAAAAQLPAEAASSVDRMLRLLASLDVVKCAPTDTGGEAAVRRYTPAPVCRWFAGERSLAPLAMFLLDDDYLSTWNQLPAAVAGGDGQVAFEKARGMPMFEYMGTNRRLNTLFNQAMVQQSTVVIGKLLERFQGFDGVSVLVDVGGGTGATLEMITSRYKNITGVNFDLPHVIAQAPSLPGVKHIAGNMFESVPNGDAIFLKSMLHLHNDEDCIKILKKCHQALTHNGKVIAVEILLPAIPEPVPTAQNPFRMDMIMLNNHWGGKERTEPEFAKLAVECGYTGVFQATYIFANYWALEFSK.

The S-adenosyl-L-homocysteine site is built by G198, D221, M242, and K255. The Proton acceptor role is filled by H259. Residues E287 and E319 contribute to the active site.

It belongs to the class I-like SAM-binding methyltransferase superfamily. Cation-independent O-methyltransferase family. COMT subfamily.

The protein is Caffeate O-methyltransferase-like protein 2 of Oryza sativa subsp. japonica (Rice).